Here is a 356-residue protein sequence, read N- to C-terminus: Neurogenic differentiation factor 1 (356 aa).

Residues Met-1–Ala-94 form a disordered region. The segment covering Glu-58 to Asp-78 has biased composition (acidic residues). The segment covering Pro-81–Lys-93 has biased composition (basic residues). A Nuclear localization signal motif is present at residues Lys-87–Lys-93. One can recognise a bHLH domain in the interval Leu-101–Leu-153. Ser-162, Ser-259, Ser-266, and Ser-274 each carry phosphoserine. The residue at position 335 (Ser-335) is a Phosphoserine; by CaMK2.

In terms of assembly, efficient DNA-binding requires dimerization with another bHLH protein. Heterodimer with TCF3/E47; the heterodimer is inhibited in presence of ID2, but not NR0B2, to E-box element. Interacts with EP300; the interaction is inhibited by NR0B2. Interacts with RREB1. Interacts with ATOH8. Phosphorylated. In islet cells, phosphorylated on Ser-274 upon glucose stimulation; which may be required for nuclear localization. In activated neurons, phosphorylated on Ser-335; which promotes dendritic growth. Phosphorylated by MAPK1; phosphorylation regulates heterodimerization and DNA-binding activities. Phosphorylation on Ser-266 and Ser-274 increases transactivation on the insulin promoter in glucose-stimulated insulinoma cells.

The protein resides in the cytoplasm. The protein localises to the nucleus. Functionally, acts as a transcriptional activator: mediates transcriptional activation by binding to E box-containing promoter consensus core sequences 5'-CANNTG-3'. Associates with the p300/CBP transcription coactivator complex to stimulate transcription of the secretin gene as well as the gene encoding the cyclin-dependent kinase inhibitor CDKN1A. Contributes to the regulation of several cell differentiation pathways, like those that promote the formation of early retinal ganglion cells, inner ear sensory neurons, granule cells forming either the cerebellum or the dentate gyrus cell layer of the hippocampus, endocrine islet cells of the pancreas and enteroendocrine cells of the small intestine. Together with PAX6 or SIX3, is required for the regulation of amacrine cell fate specification. Also required for dendrite morphogenesis and maintenance in the cerebellar cortex. Associates with chromatin to enhancer regulatory elements in genes encoding key transcriptional regulators of neurogenesis. In Homo sapiens (Human), this protein is Neurogenic differentiation factor 1 (NEUROD1).